The following is a 276-amino-acid chain: Putative non-heme chloroperoxidase (276 aa).

The 238-residue stretch at 26–263 (PIVLIHGFPL…GGPHAINWTH (238 aa)) folds into the AB hydrolase-1 domain. Residues Ser99, Asp228, and His257 contribute to the active site.

The protein belongs to the AB hydrolase superfamily. Bacterial non-heme haloperoxidase / perhydrolase family.

This Synechocystis sp. (strain ATCC 27184 / PCC 6803 / Kazusa) protein is Putative non-heme chloroperoxidase.